Consider the following 490-residue polypeptide: Cysteine--tRNA ligase (490 aa).

Cys36 serves as a coordination point for Zn(2+). The 'HIGH' region signature appears at 38–48 (VTVYDYSHIGH). Zn(2+)-binding residues include Cys216, His241, and Glu245. A 'KMSKS' region motif is present at residues 278–282 (KMSKS). Residue Lys281 coordinates ATP.

This sequence belongs to the class-I aminoacyl-tRNA synthetase family. As to quaternary structure, monomer. Zn(2+) is required as a cofactor.

Its subcellular location is the cytoplasm. It catalyses the reaction tRNA(Cys) + L-cysteine + ATP = L-cysteinyl-tRNA(Cys) + AMP + diphosphate. The chain is Cysteine--tRNA ligase from Magnetococcus marinus (strain ATCC BAA-1437 / JCM 17883 / MC-1).